A 125-amino-acid chain; its full sequence is UPF0738 protein GK0828 (125 aa).

It belongs to the UPF0738 family.

This Geobacillus kaustophilus (strain HTA426) protein is UPF0738 protein GK0828.